The sequence spans 552 residues: Putative transport protein PBPRA2144 (552 aa).

5 consecutive transmembrane segments (helical) span residues 4 to 24, 26 to 46, 65 to 85, 95 to 115, and 158 to 178; these read IALSISILALVAVLGLWIGNW, ICGVGLGIGGVLFGGIFVGHF, FGLILFVYTIGIQVGPGFFAS, AFAALVVLLGCIVAIGLYKIF, and MGYAVAYPFGICGILLTMWIL. RCK C-terminal domains follow at residues 188 to 276 and 279 to 361; these read KEAE…VIGE and DASL…IVGN. A run of 6 helical transmembrane segments spans residues 371–391, 394–414, 439–459, 464–484, 493–513, and 532–552; these read MLPVFVGIGLGVLLGSIPFYL, FPAAIKLGLAGGPLLVALILA, IVLFLAVVGLKSGGGFVDTLV, LSWMGYGIVITLVPLLTVGFL, YLTICGMLAGSMTDPPALAFA, and PLVMCLRILSPQILALLLWAV.

Belongs to the AAE transporter (TC 2.A.81) family. YidE subfamily.

It localises to the cell membrane. The sequence is that of Putative transport protein PBPRA2144 from Photobacterium profundum (strain SS9).